Reading from the N-terminus, the 951-residue chain is Valine--tRNA ligase (951 aa).

The 'HIGH' region signature appears at 42-52 (PNVTGSLHMGH). The 'KMSKS' region motif lies at 554–558 (KMSKS). Position 557 (Lys557) interacts with ATP. Positions 880–944 (AGLINKEDEL…AEAKAKLIEQ (65 aa)) form a coiled coil.

Belongs to the class-I aminoacyl-tRNA synthetase family. ValS type 1 subfamily. As to quaternary structure, monomer.

The protein resides in the cytoplasm. The enzyme catalyses tRNA(Val) + L-valine + ATP = L-valyl-tRNA(Val) + AMP + diphosphate. In terms of biological role, catalyzes the attachment of valine to tRNA(Val). As ValRS can inadvertently accommodate and process structurally similar amino acids such as threonine, to avoid such errors, it has a 'posttransfer' editing activity that hydrolyzes mischarged Thr-tRNA(Val) in a tRNA-dependent manner. The protein is Valine--tRNA ligase of Shigella dysenteriae serotype 1 (strain Sd197).